We begin with the raw amino-acid sequence, 279 residues long: Large ribosomal subunit protein uL2 (279 aa).

The segment at 223–279 (TVRGSAMNPNDHPHGGGEGRSPVGMDAPRTPWGKRHMGVKTRNNKKSSTSMIVRRRK) is disordered. Positions 254 to 267 (WGKRHMGVKTRNNK) are enriched in basic residues.

The protein belongs to the universal ribosomal protein uL2 family. Part of the 50S ribosomal subunit. Forms a bridge to the 30S subunit in the 70S ribosome.

In terms of biological role, one of the primary rRNA binding proteins. Required for association of the 30S and 50S subunits to form the 70S ribosome, for tRNA binding and peptide bond formation. It has been suggested to have peptidyltransferase activity; this is somewhat controversial. Makes several contacts with the 16S rRNA in the 70S ribosome. In Ureaplasma urealyticum serovar 10 (strain ATCC 33699 / Western), this protein is Large ribosomal subunit protein uL2.